Reading from the N-terminus, the 723-residue chain is MSKRLTPIHLPNSLNYPIEIASCLVPQGSYVKKGTPLLLYRFFTKVKEDQEDGSEVYVDREFVEQFECPVEGELVEWAVKKEESIENFSKIVAKLHEPCTHEVNYGGLCAICGKNITSQDYMGYSDMARANISMTHNTGDLTVSLEEASRLESENVKRLRQEKRLSLIVDLDQTIIHATVDPTVGEWMSDPGNVNYDVLRDVRSFNLQEGPSGYTSCYYIKFRPGLAQFLQKISELYELHIYTMGTKAYAKEVAKIIDPTGKLFQDRVLSRDDSGSLAQKSLRRLFPCDTSMVVVIDDRGDVWDWNPNLIKVVPYEFFVGIGDINSNFLAKSTPLPEQEQLIPLEIPKDEPDSVDEINEENEETPEYDSSNSSYAQDSSTIPEKTLLKDTFLQNREALEEQNKERVTALELQKSERPLAKQQNALLEDEGKPTPSHTLLHNRDHELERLEKVLKDIHAVYYEEENDISSRSGNHKHANVGLIIPKMKQKVLKGCRLLFSGVIPLGVDVLSSDIAKWAMSFGAEVVLDFSVPPTHLIAAKIRTEKVKKAVSMGNIKVVKLNWLTESLSQWKRLPESDYLLYPSYDLPDRNLSEHSYSSSSDDEQRISELNDRELDEIDWQAADQDVENALKDLSDDNDFDTGSISASQSQPEALEVNTPIKRKADLIQPSYNYDGEKRRKENDNHEGYDLLPNSSTKGEESAENENELDDLADIMEAELSKDTA.

The FCP1 homology domain maps to 160–341 (RQEKRLSLIV…STPLPEQEQL (182 aa)). Active-site residues include Asp170 and Asp172. Positions 345–380 (EIPKDEPDSVDEINEENEETPEYDSSNSSYAQDSST) are disordered. Residues 352–366 (DSVDEINEENEETPE) show a composition bias toward acidic residues. A compositionally biased stretch (low complexity) spans 367-379 (YDSSNSSYAQDSS). One can recognise a BRCT domain in the interval 486 to 579 (MKQKVLKGCR…KRLPESDYLL (94 aa)). The segment at 631–723 (DLSDDNDFDT…MEAELSKDTA (93 aa)) is disordered. A compositionally biased stretch (polar residues) spans 639–650 (DTGSISASQSQP). The segment covering 673 to 687 (DGEKRRKENDNHEGY) has biased composition (basic and acidic residues). The segment covering 700 to 715 (SAENENELDDLADIME) has biased composition (acidic residues).

Monomer. Requires Mg(2+) as cofactor. The cofactor is Mn(2+). It depends on Co(2+) as a cofactor.

It localises to the nucleus. It catalyses the reaction O-phospho-L-seryl-[protein] + H2O = L-seryl-[protein] + phosphate. It carries out the reaction O-phospho-L-threonyl-[protein] + H2O = L-threonyl-[protein] + phosphate. In terms of biological role, processively dephosphorylates 'Ser-2' and 'Ser-5' of the heptad repeats YSPTSPS in the C-terminal domain of the largest RNA polymerase II subunit. This promotes the activity of RNA polymerase II. This is RNA polymerase II subunit A C-terminal domain phosphatase (fcp1) from Schizosaccharomyces pombe (strain 972 / ATCC 24843) (Fission yeast).